A 428-amino-acid chain; its full sequence is MAKEKPILNVAFIGHVDAGKSTTVGRLLLDGGAIDPQLIVRLRKEAEEKGKAGFEFAYVMDGLKEERERGVTIDVAHKKFPTAKYEVTIVDCPGHRDFIKNMITGASQADAAILVVNVDDAKSGIQPQTREHVFLSRTLGISQLAVAINKMDTVNFSEADYNEMKKMLGDQLLKMVGFNPDNITFVPVASLHGDNVFKKSDKTPWYNGPTLAEVIDAFQPPEKPTTLPLRLPIQDVYSITGVGTVPVGRVETGIIRPGDKVIFEPAGAVGEIKTVEMHHEQLPSAEPGDNIGFNVRGVGKKDIKRGDVLGHTTNPPTVAADFTAQIVVLQHPSVMTVGYTPVFHAHTAQIACTFMELQKKLNPATGEVLEENPDFLKAGDAAIVKLMPTKPLVIESVKEIPQLGRFAIRDMGMTVAAGMAIQVTAKNK.

The 221-residue stretch at 5-225 folds into the tr-type G domain; sequence KPILNVAFIG…DAFQPPEKPT (221 aa). Residues 14–21 are G1; the sequence is GHVDAGKS. Position 14–21 (14–21) interacts with GTP; the sequence is GHVDAGKS. Ser-21 is a binding site for Mg(2+). Residues 70–74 form a G2 region; it reads GVTID. The G3 stretch occupies residues 91–94; it reads DCPG. GTP-binding positions include 91–95 and 149–152; these read DCPGH and NKMD. Positions 149–152 are G4; the sequence is NKMD. Residues 189-191 form a G5 region; sequence ASL.

Belongs to the TRAFAC class translation factor GTPase superfamily. Classic translation factor GTPase family. EF-Tu/EF-1A subfamily.

Its subcellular location is the cytoplasm. It catalyses the reaction GTP + H2O = GDP + phosphate + H(+). Its function is as follows. GTP hydrolase that promotes the GTP-dependent binding of aminoacyl-tRNA to the A-site of ribosomes during protein biosynthesis. In Methanococcus maripaludis (strain C7 / ATCC BAA-1331), this protein is Elongation factor 1-alpha.